Here is a 956-residue protein sequence, read N- to C-terminus: Glutamate receptor ionotropic, kainate 4 (956 aa).

The N-terminal stretch at 1–20 is a signal peptide; it reads MPRVSAPLVLLPAWLLMVAC. At 21–545 the chain is on the extracellular side; the sequence is SPHSLRIAAI…YFSFLDPFSP (525 aa). N-linked (GlcNAc...) asparagine glycosylation is found at asparagine 158, asparagine 220, asparagine 272, asparagine 286, asparagine 323, asparagine 408, asparagine 415, and asparagine 479. Glycine 500, threonine 502, and arginine 507 together coordinate L-glutamate. The helical transmembrane segment at 546 to 566 threads the bilayer; the sequence is GVWLFMLLAYLAVSCVLFLVA. Residues 567–623 lie on the Cytoplasmic side of the membrane; that stretch reads RLTPYEWYSPHPCAQGRCNLLVNQYSLGNSLWFPVGGFMQQGSTIAPRALSTRCVSG. Residues 624–644 form a helical membrane-spanning segment; sequence VWWAFTLIIISSYTANLAAFL. The Extracellular segment spans residues 645 to 804; the sequence is TVQRMEVPIE…HRAKGLGMEN (160 aa). L-glutamate is bound by residues serine 674, serine 675, and glutamate 723. Residue asparagine 736 is glycosylated (N-linked (GlcNAc...) asparagine). A helical transmembrane segment spans residues 805–825; sequence IGGIFVVLICGLIVAIFMAML. The Cytoplasmic portion of the chain corresponds to 826 to 956; the sequence is EFLWTLRHSE…DKTTNSSEPE (131 aa). The segment at 931–956 is disordered; it reads LRARPSPARSEESLEWDKTTNSSEPE. The segment covering 939–948 has biased composition (basic and acidic residues); that stretch reads RSEESLEWDK.

Belongs to the glutamate-gated ion channel (TC 1.A.10.1) family. GRIK4 subfamily. Homodimer. Can form functional heteromeric receptors with GRIK1, GRIK2 and GRIK3 subunits. Forms a heteromeric complex with GRIK2. In terms of tissue distribution, expressed in the hippocampus and cerebellum (at protein level).

It is found in the cell membrane. It localises to the postsynaptic cell membrane. Its subcellular location is the presynaptic cell membrane. In terms of biological role, ionotropic glutamate receptor that functions as a cation-permeable ligand-gated ion channel. Cannot form functional channels on its own and produces channel activity only in heteromeric assembly with GRIK1, GRIK2 and GRIK3 subunits. This chain is Glutamate receptor ionotropic, kainate 4 (Grik4), found in Mus musculus (Mouse).